We begin with the raw amino-acid sequence, 717 residues long: Trimethylamine N-oxide transport system permease protein TmoV (717 aa).

17 helical membrane-spanning segments follow: residues F10–P30, L69–N89, F120–V140, W153–Y173, L175–G195, F206–F226, I238–F258, A265–L285, I319–F339, Q355–L375, I402–Y422, I452–L472, L488–G508, L527–I547, L574–V594, M643–I663, and G683–I703. Residues S200–S379 form the ABC transmembrane type-1 1 domain. Positions A523–I703 constitute an ABC transmembrane type-1 2 domain.

This sequence belongs to the binding-protein-dependent transport system permease family. As to quaternary structure, the complex is probably composed of two ATP-binding proteins (TmoW), two transmembrane proteins (TmoV) and a solute-binding protein (TmoX).

Its subcellular location is the cell inner membrane. Its function is as follows. Part of the ABC transporter complex TmoXWV involved in trimethylamine N-oxide (TMAO) import. Responsible for the translocation of the substrate across the membrane. In Pelagibacter ubique (strain HTCC1062), this protein is Trimethylamine N-oxide transport system permease protein TmoV.